Reading from the N-terminus, the 495-residue chain is MPFLLAIDQGTTSSRAIVFDHEGQPIARAQKDLVQYFPGDGWVEHDATAIWEDSLAVAREALDRADVAAHAISAIGLTNQRETAVLWERASGQPVHNAIVWQDRRTAALCRELKAQGHEALVRRKTGLLIDPYFSATKIGWMLDHDPVLRRRAEAGELAFGTVESWLLYKLTGGAVHASDATNAARTLLFDIRANRWDEDLLALFRIPAALLPRVVDNAGRFGETLPGLFGAPIPITGMAGDQHAAMVGQGCFTRGMIKSTYGTGAFALLNIGQTFVESRNQLLTTLAYRLNGQSTYALEGSIFVAGAAVQWLRDGLRAISSAAETQVLAEAVADTGGCYMVPAFTGLGAPYWDPEARGAILGLTRDTSLEQVARAALEAQGYQTRDLLDAMAADSGTKPLALRVDGGMVANDWVCQFLADITGIAVERPRVIETTALGAAALAGLGAGVFASPADLGGQWHRDRLFTPHMPASRRESLYAGWVQAVRRVASDLR.

T11 lines the ADP pocket. ATP is bound by residues T11, T12, and S13. Position 11 (T11) interacts with sn-glycerol 3-phosphate. Residue R15 coordinates ADP. 4 residues coordinate sn-glycerol 3-phosphate: R81, E82, Y133, and D242. R81, E82, Y133, D242, and Q243 together coordinate glycerol. The ADP site is built by T264 and G307. 4 residues coordinate ATP: T264, G307, Q311, and G408. G408 and N412 together coordinate ADP.

It belongs to the FGGY kinase family.

It catalyses the reaction glycerol + ATP = sn-glycerol 3-phosphate + ADP + H(+). It participates in polyol metabolism; glycerol degradation via glycerol kinase pathway; sn-glycerol 3-phosphate from glycerol: step 1/1. Its activity is regulated as follows. Inhibited by fructose 1,6-bisphosphate (FBP). Key enzyme in the regulation of glycerol uptake and metabolism. Catalyzes the phosphorylation of glycerol to yield sn-glycerol 3-phosphate. This is Glycerol kinase from Rhodospirillum rubrum (strain ATCC 11170 / ATH 1.1.1 / DSM 467 / LMG 4362 / NCIMB 8255 / S1).